A 212-amino-acid chain; its full sequence is Ribosomal RNA small subunit methyltransferase G (212 aa).

S-adenosyl-L-methionine is bound by residues Gly80, Leu85, 131-132, and Arg146; that span reads AE.

The protein belongs to the methyltransferase superfamily. RNA methyltransferase RsmG family.

The protein localises to the cytoplasm. The enzyme catalyses guanosine(527) in 16S rRNA + S-adenosyl-L-methionine = N(7)-methylguanosine(527) in 16S rRNA + S-adenosyl-L-homocysteine. Functionally, specifically methylates the N7 position of guanine in position 527 of 16S rRNA. This is Ribosomal RNA small subunit methyltransferase G from Xylella fastidiosa (strain 9a5c).